A 325-amino-acid polypeptide reads, in one-letter code: MAASCVLLHTGQKMPLIGLGTWKSEPGQVKAAVKYALSVGYRHIDCAAIYGNEPEIGEALKEDVGPGKAVPREELFVTSKLWNTKHHPEDVEPALQKTLADLQLEYLDLYLMHWPYAFERGDNPFPKNADGTICYDSTHYKETWKALEALVAKGLVRALGLSNFNSRQIDDILSVASVRPAVLQVECHPYLAQNELIAHCQARGLAVTAYSPLGSSDRAWRDPDEPVLLEEPVVLALAEKYGGSPAQILLRWQVQRKVICIPKSITPSRILQNIKVFDFTFSPEEMKQLNALNKNWRHIVPMLTVDGKRVPRDAGHPLYPFNDPY.

Position 2 is an N-acetylalanine (A2). S4 bears the Phosphoserine mark. NADP(+)-binding positions include 11–20, T21, and W22; that span reads GQKMPLIGLG. Position 38 is a phosphoserine (S38). D45 serves as a coordination point for NADP(+). Y50 acts as the Proton donor in catalysis. K127 is subject to N6-acetyllysine; alternate. Residue K127 is modified to N6-succinyllysine; alternate. K145 bears the N6-succinyllysine mark. The NADP(+) site is built by S162, N163, S211, L213, S215, S216, K263, S264, I265, T266, R269, Q272, and N273. S211 carries the phosphoserine modification.

The protein belongs to the aldo/keto reductase family.

It is found in the cytoplasm. It localises to the cytosol. Its subcellular location is the apical cell membrane. The catalysed reaction is a primary alcohol + NADP(+) = an aldehyde + NADPH + H(+). It carries out the reaction L-gulonate + NADP(+) = aldehydo-D-glucuronate + NADPH + H(+). The enzyme catalyses L-gulono-1,4-lactone + NADP(+) = D-glucurono-3,6-lactone + NADPH + H(+). It catalyses the reaction allyl alcohol + NADP(+) = acrolein + NADPH + H(+). The catalysed reaction is glycerol + NADP(+) = D-glyceraldehyde + NADPH + H(+). It carries out the reaction glycerol + NADP(+) = L-glyceraldehyde + NADPH + H(+). The enzyme catalyses hydroxyacetone + NADP(+) = methylglyoxal + NADPH + H(+). It catalyses the reaction 3-deoxyfructose + NADP(+) = 3-deoxyglucosone + NADPH + H(+). The catalysed reaction is (R)-mevalonate + NADP(+) = (R)-mevaldate + NADPH + H(+). It carries out the reaction pyridine 3-methanol + NADP(+) = pyridine-3-carbaldehyde + NADPH + H(+). The enzyme catalyses S-nitroso-CoA + NADPH + H(+) = sulfinamide-CoA + NADP(+). It catalyses the reaction S-nitrosoglutathione + NADPH + H(+) = S-(hydroxysulfenamide)glutathione + NADP(+). In terms of biological role, catalyzes the NADPH-dependent reduction of a wide variety of carbonyl-containing compounds to their corresponding alcohols. Displays enzymatic activity towards endogenous metabolites such as aromatic and aliphatic aldehydes, ketones, monosaccharides and bile acids, with a preference for negatively charged substrates, such as glucuronate and succinic semialdehyde. Functions as a detoxifiying enzyme by reducing a range of toxic aldehydes. Reduces methylglyoxal and 3-deoxyglucosone, which are present at elevated levels under hyperglycemic conditions and are cytotoxic. Involved also in the detoxification of lipid-derived aldehydes like acrolein. Plays a role in the activation of procarcinogens, such as polycyclic aromatic hydrocarbon trans-dihydrodiols, and in the metabolism of various xenobiotics and drugs. Also acts as an inhibitor of protein S-nitrosylation by mediating degradation of S-nitroso-coenzyme A (S-nitroso-CoA), a cofactor required to S-nitrosylate proteins. S-nitroso-CoA reductase activity is involved in reprogramming intermediary metabolism in renal proximal tubules, notably by inhibiting protein S-nitrosylation of isoform 2 of PKM (PKM2). Also acts as a S-nitroso-glutathione reductase by catalyzing the NADPH-dependent reduction of S-nitrosoglutathione. Displays no reductase activity towards retinoids. The polypeptide is Aldo-keto reductase family 1 member A1 (AKR1A1) (Pongo abelii (Sumatran orangutan)).